The chain runs to 498 residues: uncharacterized protein (498 aa).

Positions 1-26 (MEESSMAQASLICLLLSFSIIMLSNA) are cleaved as a signal peptide. Topologically, residues 27–441 (ADISIDCGSS…GEEKSSSNLA (415 aa)) are extracellular. Asn-44, Asn-150, Asn-354, and Asn-357 each carry an N-linked (GlcNAc...) asparagine glycan. The tract at residues 351–439 (GSGNGTNSTS…KSGEEKSSSN (89 aa)) is disordered. Gly residues predominate over residues 362 to 414 (SGGGSPSPGGGSGSPPSTGGGSGSPPSTGGGGGSPSKGGGGGKSGGSNNGDGG). Positions 418-436 (ASEDEKSADSSGKSGEEKS) are enriched in basic and acidic residues. Residues 442 to 462 (LPLGISLPTLLSLGAGGWGVW) traverse the membrane as a helical segment. The Cytoplasmic segment spans residues 463 to 498 (KYFIKPRRHPESELPLKQNISLQVNMGNATVVNAGQ).

The protein resides in the membrane. This is an uncharacterized protein from Arabidopsis thaliana (Mouse-ear cress).